Here is an 895-residue protein sequence, read N- to C-terminus: Splicing factor 3B subunit 2 (895 aa).

A compositionally biased stretch (basic and acidic residues) spans 1–10 (MATEHPEPPK). Disordered stretches follow at residues 1 to 24 (MATE…PGHY), 65 to 136 (LNRP…LRVG), 197 to 373 (AKMG…EYVT), and 400 to 453 (KKEK…SKKK). K10 is covalently cross-linked (Glycyl lysine isopeptide (Lys-Gly) (interchain with G-Cter in SUMO2)). Residues 24-58 (YGAWAAQELQAKLAEIGAPIQGNREELVERLQSYT) enclose the SAP domain. 2 stretches are compositionally biased toward pro residues: residues 90–114 (IPMP…PPPG) and 122–133 (AHPPNLGPPPPL). A coiled-coil region spans residues 140-199 (ALSEEERLKLAQQQAALLMQQEERAKQQGDHSLKEHELLEQQKRAAVLLEQERQQEIAKM). Positions 218-238 (PLGPRVAAPVGPVGPTPTVLP) are enriched in low complexity. Omega-N-methylarginine is present on residues R222, R245, and R247. A compositionally biased stretch (pro residues) spans 241–254 (APVPRPRGPPPPPG). K275 is subject to N6-acetyllysine. Over residues 277 to 286 (LQLKESRQEE) the composition is skewed to basic and acidic residues. K280 participates in a covalent cross-link: Glycyl lysine isopeptide (Lys-Gly) (interchain with G-Cter in SUMO2). S289 carries the post-translational modification Phosphoserine. At T298 the chain carries Phosphothreonine. A phosphoserine mark is found at S307 and S309. T311 bears the Phosphothreonine mark. Residue S317 is modified to Phosphoserine. The segment covering 322–338 (EKNRKRRNRKKKKKPQR) has biased composition (basic residues). Positions 347-359 (SGDREKDSTRSRG) are enriched in basic and acidic residues. Residues S360 and S362 each carry the phosphoserine modification. Residues K400 and K412 each participate in a glycyl lysine isopeptide (Lys-Gly) (interchain with G-Cter in SUMO2) cross-link. 2 stretches are compositionally biased toward basic and acidic residues: residues 400–414 (KKEK…DKLE) and 422–431 (KGFEEEHKDS). The interval 401 to 550 (KEKEKEPEKL…QEKEEQKTMK (150 aa)) is required for interaction with PRMT9. Phosphoserine occurs at positions 431, 435, and 436. K492 participates in a covalent cross-link: Glycyl lysine isopeptide (Lys-Gly) (interchain with G-Cter in SUMO2). R508 is modified (omega-N-methylarginine; by PRMT9; alternate). Position 508 is a symmetric dimethylarginine; by PRMT9; alternate (R508). The residue at position 515 (R515) is an Omega-N-methylarginine. Residue K543 forms a Glycyl lysine isopeptide (Lys-Gly) (interchain with G-Cter in SUMO2) linkage. The interval 691–757 (AAEFQTKTEE…PGGFSSVPAG (67 aa)) is disordered. Positions 712 to 732 (EPSDEESSEEEEEEESDEDKP) are enriched in acidic residues. Residue K770 forms a Glycyl lysine isopeptide (Lys-Gly) (interchain with G-Cter in SUMO2) linkage. T780 carries the phosphothreonine modification. Glycyl lysine isopeptide (Lys-Gly) (interchain with G-Cter in SUMO2) cross-links involve residues K790, K843, and K857. Basic and acidic residues predominate over residues 844–869 (YEEHVREQQAQVEKEDFSDMVAEHAA). The tract at residues 844-895 (YEEHVREQQAQVEKEDFSDMVAEHAAKQKQKKRKAQPQDSRGGSKKYKEFKF) is disordered. S861 bears the Phosphoserine mark.

In terms of assembly, component of the 17S U2 SnRNP complex, a ribonucleoprotein complex that contains small nuclear RNA (snRNA) U2 and a number of specific proteins. Part of the SF3B subcomplex of the 17S U2 SnRNP complex. SF3B associates with the splicing subcomplex SF3A and a 12S RNA unit to form the U2 small nuclear ribonucleoproteins complex (U2 snRNP). Within the SF3B complex, interacts directly with SF3B4. Found in a complex with PRMT9, SF3B2 and SF3B4. Interacts (Arg-508-methylated form) with SMN1 (via Tudor domain). Interacts with RBM7. Interacts with ERCC6. Component of the minor spliceosome. Within this complex, interacts with SCNM1 and CRIPT. As to quaternary structure, (Microbial infection) Interacts with HIV-1 Vpr. In terms of processing, methylation at Arg-508 by PRMT9 is required for the interaction with SMN1.

Its subcellular location is the nucleus. It is found in the nucleus speckle. In terms of biological role, component of the 17S U2 SnRNP complex of the spliceosome, a large ribonucleoprotein complex that removes introns from transcribed pre-mRNAs. The 17S U2 SnRNP complex (1) directly participates in early spliceosome assembly and (2) mediates recognition of the intron branch site during pre-mRNA splicing by promoting the selection of the pre-mRNA branch-site adenosine, the nucleophile for the first step of splicing. Within the 17S U2 SnRNP complex, SF3B2 is part of the SF3B subcomplex, which is required for 'A' complex assembly formed by the stable binding of U2 snRNP to the branchpoint sequence in pre-mRNA. Sequence independent binding of SF3A and SF3B subcomplexes upstream of the branch site is essential, it may anchor U2 snRNP to the pre-mRNA. May also be involved in the assembly of the 'E' complex. Also acts as a component of the minor spliceosome, which is involved in the splicing of U12-type introns in pre-mRNAs. This is Splicing factor 3B subunit 2 (SF3B2) from Homo sapiens (Human).